A 327-amino-acid polypeptide reads, in one-letter code: Metaxin-1 homolog (327 aa).

A helical membrane pass occupies residues 281–301 (IVAGVGAVLAMGAFAAWRGIY).

The protein belongs to the metaxin family. In terms of assembly, associates with the mitochondrial contact site and cristae organizing system (MICOS) complex (also known as MINOS or MitOS complex).

It localises to the mitochondrion outer membrane. Functionally, involved in transport of proteins into the mitochondrion. Essential for embryonic development. The polypeptide is Metaxin-1 homolog (Drosophila melanogaster (Fruit fly)).